The primary structure comprises 449 residues: Methylenetetrahydrofolate--tRNA-(uracil-5-)-methyltransferase TrmFO (449 aa).

9 to 14 (GGGMAG) serves as a coordination point for FAD.

Belongs to the MnmG family. TrmFO subfamily. Requires FAD as cofactor.

Its subcellular location is the cytoplasm. It carries out the reaction uridine(54) in tRNA + (6R)-5,10-methylene-5,6,7,8-tetrahydrofolate + NADH + H(+) = 5-methyluridine(54) in tRNA + (6S)-5,6,7,8-tetrahydrofolate + NAD(+). It catalyses the reaction uridine(54) in tRNA + (6R)-5,10-methylene-5,6,7,8-tetrahydrofolate + NADPH + H(+) = 5-methyluridine(54) in tRNA + (6S)-5,6,7,8-tetrahydrofolate + NADP(+). Its function is as follows. Catalyzes the folate-dependent formation of 5-methyl-uridine at position 54 (M-5-U54) in all tRNAs. The protein is Methylenetetrahydrofolate--tRNA-(uracil-5-)-methyltransferase TrmFO of Ruegeria pomeroyi (strain ATCC 700808 / DSM 15171 / DSS-3) (Silicibacter pomeroyi).